We begin with the raw amino-acid sequence, 361 residues long: MSIRLRAEMADLPAYAPGKTVPGAIKIASNETVHGPLPSVREAILKATDLINRYPDNGYLDLRERLAKHVNFAPENISVGCGSVSLCQQLIQITSSVGDEVLFAWRSFEIYPLQVRTAGATPVAVALRDHTHDLDAMLAAITDRTRLIFVCNPNNPTSTVVDPGELARFVAAVPPHILVVLDEAYVEYIRDGLLPDSLGLVREHRNVVVLRTFSKAYGLAGLRVGYAVADPEIVTALGKVYVPFSATSVSQAAAIACLDAADELLARTDAVVAERTRVSDALRAAGYTLPPSQANFVWLPLAERTLDFVARAADNRIIVRPYGEDGVRVTIGAPHENDAFLDFAQRWIAPGGAGPRTGDSA.

N6-(pyridoxal phosphate)lysine is present on lysine 215.

The protein belongs to the class-II pyridoxal-phosphate-dependent aminotransferase family. In terms of assembly, homodimer. Requires pyridoxal 5'-phosphate as cofactor.

It catalyses the reaction an aromatic L-alpha-amino acid + 2-oxoglutarate = an aromatic oxo-acid + L-glutamate. Its function is as follows. Aminotransferase that catalyzes the conversion of aromatic amino acids and 2-oxoglutarate into corresponding aromatic oxo acids and L-glutamate. This is Aromatic amino acid aminotransferase from Mycolicibacterium smegmatis (strain ATCC 700084 / mc(2)155) (Mycobacterium smegmatis).